We begin with the raw amino-acid sequence, 103 residues long: Small ribosomal subunit protein uS14c (103 aa).

The interval 26–56 (SSKKKIRSKVSPLSLSEKTKMQEKLQSLPRN) is disordered.

The protein belongs to the universal ribosomal protein uS14 family. Part of the 30S ribosomal subunit.

It is found in the plastid. The protein resides in the chloroplast. Binds 16S rRNA, required for the assembly of 30S particles. The sequence is that of Small ribosomal subunit protein uS14c from Saccharum officinarum (Sugarcane).